We begin with the raw amino-acid sequence, 281 residues long: 4-hydroxy-3-methylbut-2-enyl diphosphate reductase (281 aa).

Cys-12 contacts [4Fe-4S] cluster. (2E)-4-hydroxy-3-methylbut-2-enyl diphosphate contacts are provided by His-41 and His-74. Dimethylallyl diphosphate contacts are provided by His-41 and His-74. His-41 and His-74 together coordinate isopentenyl diphosphate. Residue Cys-96 participates in [4Fe-4S] cluster binding. His-124 provides a ligand contact to (2E)-4-hydroxy-3-methylbut-2-enyl diphosphate. His-124 contacts dimethylallyl diphosphate. His-124 contacts isopentenyl diphosphate. Glu-126 functions as the Proton donor in the catalytic mechanism. Residue Thr-164 coordinates (2E)-4-hydroxy-3-methylbut-2-enyl diphosphate. Position 193 (Cys-193) interacts with [4Fe-4S] cluster. The (2E)-4-hydroxy-3-methylbut-2-enyl diphosphate site is built by Ser-221, Asn-223, and Ser-265. Dimethylallyl diphosphate is bound by residues Ser-221, Asn-223, and Ser-265. Residues Ser-221, Asn-223, and Ser-265 each contribute to the isopentenyl diphosphate site.

The protein belongs to the IspH family. It depends on [4Fe-4S] cluster as a cofactor.

The enzyme catalyses isopentenyl diphosphate + 2 oxidized [2Fe-2S]-[ferredoxin] + H2O = (2E)-4-hydroxy-3-methylbut-2-enyl diphosphate + 2 reduced [2Fe-2S]-[ferredoxin] + 2 H(+). The catalysed reaction is dimethylallyl diphosphate + 2 oxidized [2Fe-2S]-[ferredoxin] + H2O = (2E)-4-hydroxy-3-methylbut-2-enyl diphosphate + 2 reduced [2Fe-2S]-[ferredoxin] + 2 H(+). It functions in the pathway isoprenoid biosynthesis; dimethylallyl diphosphate biosynthesis; dimethylallyl diphosphate from (2E)-4-hydroxy-3-methylbutenyl diphosphate: step 1/1. It participates in isoprenoid biosynthesis; isopentenyl diphosphate biosynthesis via DXP pathway; isopentenyl diphosphate from 1-deoxy-D-xylulose 5-phosphate: step 6/6. Catalyzes the conversion of 1-hydroxy-2-methyl-2-(E)-butenyl 4-diphosphate (HMBPP) into a mixture of isopentenyl diphosphate (IPP) and dimethylallyl diphosphate (DMAPP). Acts in the terminal step of the DOXP/MEP pathway for isoprenoid precursor biosynthesis. This is 4-hydroxy-3-methylbut-2-enyl diphosphate reductase from Oleidesulfovibrio alaskensis (strain ATCC BAA-1058 / DSM 17464 / G20) (Desulfovibrio alaskensis).